Here is a 265-residue protein sequence, read N- to C-terminus: uncharacterized protein (265 aa).

Residues 143 to 205 (ATQKALKDSI…EKLIKSVEKA (63 aa)) adopt a coiled-coil conformation.

This is an uncharacterized protein from Aquifex aeolicus (strain VF5).